Consider the following 100-residue polypeptide: Urease subunit gamma (100 aa).

It belongs to the urease gamma subunit family. As to quaternary structure, heterotrimer of UreA (gamma), UreB (beta) and UreC (alpha) subunits. Three heterotrimers associate to form the active enzyme.

The protein resides in the cytoplasm. It carries out the reaction urea + 2 H2O + H(+) = hydrogencarbonate + 2 NH4(+). It functions in the pathway nitrogen metabolism; urea degradation; CO(2) and NH(3) from urea (urease route): step 1/1. The polypeptide is Urease subunit gamma (Jannaschia sp. (strain CCS1)).